The primary structure comprises 155 residues: Transcriptional repressor NrdR (155 aa).

A zinc finger lies at 3–34 (CPYCGHLEDRVVDSRETQDGQATRRRRACLSC). Residues 49–139 (PQVVKKDGRR…VYRAFRDVGE (91 aa)) enclose the ATP-cone domain.

It belongs to the NrdR family. The cofactor is Zn(2+).

Negatively regulates transcription of bacterial ribonucleotide reductase nrd genes and operons by binding to NrdR-boxes. This is Transcriptional repressor NrdR from Anaeromyxobacter dehalogenans (strain 2CP-1 / ATCC BAA-258).